Here is a 539-residue protein sequence, read N- to C-terminus: 3-methylmercaptopropionyl-CoA ligase (539 aa).

T185 contributes to the Mg(2+) binding site. ATP contacts are provided by H231, G303, H324, A325, and S329. E330 contacts Mg(2+). 4 residues coordinate ATP: Q359, D417, R432, and K523.

Belongs to the ATP-dependent AMP-binding enzyme family. As to quaternary structure, homodimer. The cofactor is Mg(2+).

The enzyme catalyses 3-(methylsulfanyl)propanoate + ATP + CoA = 3-(methylsulfanyl)propanoyl-CoA + AMP + diphosphate. It participates in lipid metabolism; fatty acid metabolism. Its activity is regulated as follows. Activated by LiCl and NH(4)Cl. Inhibited by dimethylsulfoniopropionate (DMSP). MMPA concentrations above 2 mM relieve the DMSP inhibition and 80% of activity is regained at an MMPA concentration of 8 mM. Functionally, involved in the assimilation of dimethylsulphoniopropionate (DMSP), an important compound in the fixation of carbon in marine phytoplankton. Catalyzes the ATP-dependent ligation of methylmercaptopropionate (MMPA) and CoA to yield methylmercaptopropionate-CoA (MMPA-CoA). It is also active with short-chain-fatty-acid (carboxylic acids up to six carbons in length). The polypeptide is 3-methylmercaptopropionyl-CoA ligase (Ruegeria pomeroyi (strain ATCC 700808 / DSM 15171 / DSS-3) (Silicibacter pomeroyi)).